We begin with the raw amino-acid sequence, 632 residues long: Gamma-aminobutyric acid receptor subunit theta (632 aa).

A signal peptide spans 1–21 (MGIRGMLRAAVILLLIRTWLA). The Extracellular portion of the chain corresponds to 22–268 (EGNYPSPIPK…FQVQREVNSY (247 aa)). N-linked (GlcNAc...) asparagine glycosylation occurs at Asn127. A disulfide bridge connects residues Cys183 and Cys197. The chain crosses the membrane as a helical span at residues 269-289 (LVQVYWPTVLTTITSWISFWM). Topologically, residues 290–297 (NYDSSAAR) are cytoplasmic. Residues 298–315 (VTIGLTSMLILTTIDSHL) form a helical membrane-spanning segment. The Extracellular segment spans residues 316–326 (RDKLPNISCIK). A helical membrane pass occupies residues 327-347 (AIDIYILVCLFFVFLSLLEYV). At 348–611 (YINYLFYSRG…DYVPKVDKWS (264 aa)) the chain is on the cytoplasmic side. Disordered stretches follow at residues 410–458 (SPES…STSE) and 491–523 (HGVTHDHEDSNESLSSDERHGHGPSGKPMLHHG). Polar residues predominate over residues 413–425 (SLGSLTSTSEQAQ). Residues 426 to 439 (LATSESLSPLTSLS) are compositionally biased toward low complexity. A compositionally biased stretch (polar residues) spans 448-458 (ESLSDLPSTSE). Basic and acidic residues predominate over residues 491–511 (HGVTHDHEDSNESLSSDERHG). Residues 612–632 (RFLFPLAFGLFNIVYWVYHMY) traverse the membrane as a helical segment.

Belongs to the ligand-gated ion channel (TC 1.A.9) family. Gamma-aminobutyric acid receptor (TC 1.A.9.5) subfamily. GABRQ sub-subfamily. As to quaternary structure, heteropentamer, formed by a combination of alpha (GABRA1-6), beta (GABRB1-3), gamma (GABRG1-3), delta (GABRD), epsilon (GABRE), rho (GABRR1-3), pi (GABRP) and theta (GABRQ) chains, each subunit exhibiting distinct physiological and pharmacological properties. In terms of tissue distribution, expressed in brain.

Its subcellular location is the postsynaptic cell membrane. It is found in the cell membrane. The catalysed reaction is chloride(in) = chloride(out). Potentiated by etomidate, propofol, pregnanolone and pentobarbital. Functionally, theta subunit of the heteropentameric ligand-gated chloride channel gated by gamma-aminobutyric acid (GABA), a major inhibitory neurotransmitter in the brain. GABA-gated chloride channels, also named GABA(A) receptors (GABAAR), consist of five subunits arranged around a central pore and contain GABA active binding site(s) located at the alpha and beta subunit interfaces. When activated by GABA, GABAARs selectively allow the flow of chloride anions across the cell membrane down their electrochemical gradient. In Homo sapiens (Human), this protein is Gamma-aminobutyric acid receptor subunit theta.